The primary structure comprises 1245 residues: Nidogen-1 (1245 aa).

A signal peptide spans 1-28; that stretch reads MLDASGCSWAMWTWALLQLLLLVGPGGC. The region spanning 106-268 is the NIDO domain; it reads PFLADLDTTD…GVWVFEIGSP (163 aa). N-linked (GlcNAc...) asparagine glycosylation is present at Asn-187. Tyr-290 and Tyr-295 each carry sulfotyrosine. O-linked (GalNAc...) threonine glycosylation is present at Thr-299. The segment at 307-344 is disordered; it reads VATPSPSHSPRRGYPDPHNVPRILSPGYEATERPRGVP. A glycan (O-linked (GalNAc...) serine) is linked at Ser-331. 2 O-linked (GalNAc...) threonine glycosylation sites follow: Thr-337 and Thr-345. Thr-348 is a glycosylation site (O-linked (GalNAc...) threonine; partial). An EGF-like 1 domain is found at 384–424; sequence SQQTCANNRHQCSVHAECRDYATGFCCRCVANYTGNGRQCV. Cystine bridges form between Cys-388-Cys-401, Cys-395-Cys-410, Cys-409-Cys-616, Cys-412-Cys-423, Cys-670-Cys-683, Cys-677-Cys-693, Cys-695-Cys-706, Cys-712-Cys-725, Cys-719-Cys-734, Cys-736-Cys-748, Cys-760-Cys-775, Cys-767-Cys-785, Cys-787-Cys-798, Cys-804-Cys-815, Cys-809-Cys-824, Cys-826-Cys-837, Cys-847-Cys-876, Cys-887-Cys-894, and Cys-896-Cys-917. Asn-415 is a glycosylation site (N-linked (GlcNAc...) asparagine). The 238-residue stretch at 428-665 folds into the Nidogen G2 beta-barrel domain; that stretch reads SPQRVNGKVK…GPVRDGSPDA (238 aa). The EGF-like 2 domain maps to 666-707; sequence LQNPCYIGTHGCDSNAACRPGPGTQFTCECSIGFRGDGQTCY. Positions 700–702 match the Cell attachment site motif; it reads RGD. The 42-residue stretch at 708–749 folds into the EGF-like 3; calcium-binding domain; that stretch reads DIDECSEQPSRCGNHAVCNNLPGTFRCECVEGYHFSDRGTCV. The EGF-like 4 domain occupies 756–799; sequence PINYCETGLHNCDIPQRAQCIYMGGSSYTCSCLPGFSGDGRACR. The 39-residue stretch at 800–838 folds into the EGF-like 5; calcium-binding domain; the sequence is DVDECQHSRCHPDAFCYNTPGSFTCQCKPGYQGDGFRCM. Residues 844–917 enclose the Thyroglobulin type-1 domain; it reads KTRCQLEREH…RTPPGMRPPC (74 aa). 2 O-linked (GalNAc...) threonine glycosylation sites follow: Thr-920 and Thr-933. LDL-receptor class B repeat units follow at residues 988–1030, 1031–1073, 1074–1118, and 1119–1160; these read KVVY…DHLG, RTIF…DPVR, GNLY…DAFS, and SQLC…YGKN. Residues 1206–1242 form the EGF-like 6 domain; sequence GHNYCSVNNGGCTHLCLPTPGSRTCRCPDNTLGVDCI. Cystine bridges form between Cys-1210–Cys-1221, Cys-1217–Cys-1230, and Cys-1232–Cys-1241.

In terms of assembly, interacts with FBLN1. Interacts with LGALS3BP. Interacts with PLXDC1. Interacts with SVEP1. Post-translationally, N- and O-glycosylated.

It is found in the secreted. It localises to the extracellular space. Its subcellular location is the extracellular matrix. The protein resides in the basement membrane. Sulfated glycoprotein widely distributed in basement membranes and tightly associated with laminin. Also binds to collagen IV and perlecan. It probably has a role in cell-extracellular matrix interactions. The protein is Nidogen-1 (Nid1) of Mus musculus (Mouse).